The sequence spans 336 residues: MIEADRLISAGTTLPEDGADRAIRPKLLEEYVGQPQVRSQMEIFIKAAKLRGDALDHLLIFGPPGLGKTTLANIVANEMGVNLRTTSGPVLEKAGDLAAMLTNLEPHDVLFIDEIHRLSPVVEEVLYPAMEDYQLDIMIGEGPAARSIKIDLPPFTLIGATTRAGSLTSPLRDRFGIVQRLEFYQVPDLQYIVSRSARFMGLEMSDDGALEVARRARGTPRIANRLLRRVRDFAEVKHDGTISADIAAQALDMLNVDAEGFDYMDRKLLLAVIDKFFGGPVGLDNLAAAIGEERETIEDVLEPYLIQQGFLQRTPRGRMATTRAWNHFGITPPEMP.

A large ATPase domain (RuvB-L) region spans residues 4-184; sequence ADRLISAGTT…FGIVQRLEFY (181 aa). Residues Ile23, Arg24, Gly65, Lys68, Thr69, Thr70, 131–133, Arg174, Tyr184, and Arg221 contribute to the ATP site; that span reads EDY. Position 69 (Thr69) interacts with Mg(2+). The small ATPAse domain (RuvB-S) stretch occupies residues 185-255; sequence QVPDLQYIVS…IAAQALDMLN (71 aa). Residues 258 to 336 are head domain (RuvB-H); the sequence is AEGFDYMDRK…HFGITPPEMP (79 aa). DNA-binding residues include Arg294, Arg313, and Arg318.

This sequence belongs to the RuvB family. As to quaternary structure, homohexamer. Forms an RuvA(8)-RuvB(12)-Holliday junction (HJ) complex. HJ DNA is sandwiched between 2 RuvA tetramers; dsDNA enters through RuvA and exits via RuvB. An RuvB hexamer assembles on each DNA strand where it exits the tetramer. Each RuvB hexamer is contacted by two RuvA subunits (via domain III) on 2 adjacent RuvB subunits; this complex drives branch migration. In the full resolvosome a probable DNA-RuvA(4)-RuvB(12)-RuvC(2) complex forms which resolves the HJ.

The protein localises to the cytoplasm. It catalyses the reaction ATP + H2O = ADP + phosphate + H(+). Functionally, the RuvA-RuvB-RuvC complex processes Holliday junction (HJ) DNA during genetic recombination and DNA repair, while the RuvA-RuvB complex plays an important role in the rescue of blocked DNA replication forks via replication fork reversal (RFR). RuvA specifically binds to HJ cruciform DNA, conferring on it an open structure. The RuvB hexamer acts as an ATP-dependent pump, pulling dsDNA into and through the RuvAB complex. RuvB forms 2 homohexamers on either side of HJ DNA bound by 1 or 2 RuvA tetramers; 4 subunits per hexamer contact DNA at a time. Coordinated motions by a converter formed by DNA-disengaged RuvB subunits stimulates ATP hydrolysis and nucleotide exchange. Immobilization of the converter enables RuvB to convert the ATP-contained energy into a lever motion, pulling 2 nucleotides of DNA out of the RuvA tetramer per ATP hydrolyzed, thus driving DNA branch migration. The RuvB motors rotate together with the DNA substrate, which together with the progressing nucleotide cycle form the mechanistic basis for DNA recombination by continuous HJ branch migration. Branch migration allows RuvC to scan DNA until it finds its consensus sequence, where it cleaves and resolves cruciform DNA. In Shigella sonnei (strain Ss046), this protein is Holliday junction branch migration complex subunit RuvB.